We begin with the raw amino-acid sequence, 122 residues long: Large ribosomal subunit protein bL12 (122 aa).

The protein belongs to the bacterial ribosomal protein bL12 family. As to quaternary structure, homodimer. Part of the ribosomal stalk of the 50S ribosomal subunit. Forms a multimeric L10(L12)X complex, where L10 forms an elongated spine to which 2 to 4 L12 dimers bind in a sequential fashion. Binds GTP-bound translation factors.

Functionally, forms part of the ribosomal stalk which helps the ribosome interact with GTP-bound translation factors. Is thus essential for accurate translation. This chain is Large ribosomal subunit protein bL12, found in Pseudomonas entomophila (strain L48).